A 405-amino-acid chain; its full sequence is S-adenosylmethionine synthase (405 aa).

141–146 (GQGSVD) lines the ATP pocket.

Belongs to the AdoMet synthase 2 family. Requires Mg(2+) as cofactor.

The catalysed reaction is L-methionine + ATP + H2O = S-adenosyl-L-methionine + phosphate + diphosphate. Its pathway is amino-acid biosynthesis; S-adenosyl-L-methionine biosynthesis; S-adenosyl-L-methionine from L-methionine: step 1/1. Functionally, catalyzes the formation of S-adenosylmethionine from methionine and ATP. The polypeptide is S-adenosylmethionine synthase (Methanococcus maripaludis (strain C6 / ATCC BAA-1332)).